The primary structure comprises 217 residues: Uracil-DNA glycosylase (217 aa).

Asp62 (proton acceptor) is an active-site residue.

The protein belongs to the uracil-DNA glycosylase (UDG) superfamily. UNG family.

The protein localises to the cytoplasm. The enzyme catalyses Hydrolyzes single-stranded DNA or mismatched double-stranded DNA and polynucleotides, releasing free uracil.. Its function is as follows. Excises uracil residues from the DNA which can arise as a result of misincorporation of dUMP residues by DNA polymerase or due to deamination of cytosine. The protein is Uracil-DNA glycosylase of Streptococcus pneumoniae (strain JJA).